Consider the following 622-residue polypeptide: 1-deoxy-D-xylulose-5-phosphate synthase (622 aa).

Residues His-80 and 121–123 (GHS) each bind thiamine diphosphate. A Mg(2+)-binding site is contributed by Asp-152. Thiamine diphosphate is bound by residues 153–154 (GA), Asn-181, Tyr-288, and Glu-370. Asn-181 provides a ligand contact to Mg(2+).

It belongs to the transketolase family. DXPS subfamily. In terms of assembly, homodimer. Mg(2+) is required as a cofactor. Thiamine diphosphate serves as cofactor.

The enzyme catalyses D-glyceraldehyde 3-phosphate + pyruvate + H(+) = 1-deoxy-D-xylulose 5-phosphate + CO2. It participates in metabolic intermediate biosynthesis; 1-deoxy-D-xylulose 5-phosphate biosynthesis; 1-deoxy-D-xylulose 5-phosphate from D-glyceraldehyde 3-phosphate and pyruvate: step 1/1. In terms of biological role, catalyzes the acyloin condensation reaction between C atoms 2 and 3 of pyruvate and glyceraldehyde 3-phosphate to yield 1-deoxy-D-xylulose-5-phosphate (DXP). This is 1-deoxy-D-xylulose-5-phosphate synthase from Shewanella amazonensis (strain ATCC BAA-1098 / SB2B).